The following is a 257-amino-acid chain: MAAPWASLRLVAPMWNGRIRGIHRLGAAVAPEGNQKKKRTILQFLTNYFYDVEALRDYLLQREMYKVHEKNRSYTWLEKQHGPYGAGAFFILKQGGAVKFRDKEWIRPDKYGHFSQEFWNFCEVPVEAVDAGDCDINYEGLDNLLRLKELQSLSLQRCCHVDDWCLSRLYPLADSLQELSLAGCPRISERGLACLHHLQNLRRLDISDLPAVSNPGLTQILVEEMLPNCEVVGVDWAEGLKSGPEEQPRDTASPVPA.

S253 is subject to Phosphoserine.

This sequence belongs to the ATP synthase subunit s family. Interacts with incompletely assembled mitochondrial NADH:ubiquinone oxidoreductase complex (complex I).

The protein localises to the mitochondrion. Required for the assembly of the mitochondrial NADH:ubiquinone oxidoreductase complex (complex I). Involved in the assembly of the distal region of complex I. The chain is Distal membrane-arm assembly complex protein 2 from Homo sapiens (Human).